Here is a 72-residue protein sequence, read N- to C-terminus: SRY-related protein AES2 (72 aa).

Residues 1–69 (VKRPMNAFMV…KHMADYPDYK (69 aa)) constitute a DNA-binding region (HMG box).

It is found in the nucleus. In Alligator mississippiensis (American alligator), this protein is SRY-related protein AES2.